A 345-amino-acid polypeptide reads, in one-letter code: Heat-inducible transcription repressor HrcA (345 aa).

Belongs to the HrcA family.

Functionally, negative regulator of class I heat shock genes (grpE-dnaK-dnaJ and groELS operons). Prevents heat-shock induction of these operons. This chain is Heat-inducible transcription repressor HrcA, found in Lachnoclostridium phytofermentans (strain ATCC 700394 / DSM 18823 / ISDg) (Clostridium phytofermentans).